The chain runs to 97 residues: MIDLEQVRKVAHLARLELTPEEEQRLPSQLSAILDYVEQLSELDTDNVEPTTRAIDVSNITRTDEQKTFGDCQLLLDNAPDREDDYFRVPKILGESE.

Belongs to the GatC family. Heterotrimer of A, B and C subunits.

It catalyses the reaction L-glutamyl-tRNA(Gln) + L-glutamine + ATP + H2O = L-glutaminyl-tRNA(Gln) + L-glutamate + ADP + phosphate + H(+). The catalysed reaction is L-aspartyl-tRNA(Asn) + L-glutamine + ATP + H2O = L-asparaginyl-tRNA(Asn) + L-glutamate + ADP + phosphate + 2 H(+). Allows the formation of correctly charged Asn-tRNA(Asn) or Gln-tRNA(Gln) through the transamidation of misacylated Asp-tRNA(Asn) or Glu-tRNA(Gln) in organisms which lack either or both of asparaginyl-tRNA or glutaminyl-tRNA synthetases. The reaction takes place in the presence of glutamine and ATP through an activated phospho-Asp-tRNA(Asn) or phospho-Glu-tRNA(Gln). The sequence is that of Aspartyl/glutamyl-tRNA(Asn/Gln) amidotransferase subunit C from Picosynechococcus sp. (strain ATCC 27264 / PCC 7002 / PR-6) (Agmenellum quadruplicatum).